Here is a 392-residue protein sequence, read N- to C-terminus: G2/mitotic-specific cyclin-B2 (392 aa).

This sequence belongs to the cyclin family. Cyclin AB subfamily. As to quaternary structure, interacts with the CDK1 protein kinase to form a serine/threonine kinase holoenzyme complex also known as maturation promoting factor (MPF). The cyclin subunit imparts substrate specificity to the complex.

Functionally, essential for the control of the cell cycle at the G2/M (mitosis) transition. The sequence is that of G2/mitotic-specific cyclin-B2 (CCNB2) from Rana japonica (Japanese reddish frog).